The sequence spans 404 residues: Tryptophan synthase beta chain (404 aa).

Lysine 94 is subject to N6-(pyridoxal phosphate)lysine.

This sequence belongs to the TrpB family. In terms of assembly, tetramer of two alpha and two beta chains. Pyridoxal 5'-phosphate is required as a cofactor.

The enzyme catalyses (1S,2R)-1-C-(indol-3-yl)glycerol 3-phosphate + L-serine = D-glyceraldehyde 3-phosphate + L-tryptophan + H2O. The protein operates within amino-acid biosynthesis; L-tryptophan biosynthesis; L-tryptophan from chorismate: step 5/5. Functionally, the beta subunit is responsible for the synthesis of L-tryptophan from indole and L-serine. The chain is Tryptophan synthase beta chain from Staphylococcus aureus (strain JH1).